Reading from the N-terminus, the 370-residue chain is Glutathione S-transferase omega-like 2 (370 aa).

Residue R15 participates in glutathione binding. C46 (nucleophile) is an active-site residue. Residues W79, R155, V158, E173, and S174 each contribute to the glutathione site. Positions 201–353 (PAQLKTQIDD…LHYTRSHTRI (153 aa)) constitute a GST C-terminal domain.

Belongs to the GST superfamily. Omega family. As to quaternary structure, homodimer.

Its subcellular location is the cytoplasm. It carries out the reaction RX + glutathione = an S-substituted glutathione + a halide anion + H(+). It catalyses the reaction L-dehydroascorbate + 2 glutathione = glutathione disulfide + L-ascorbate. Its function is as follows. Active as '1-Cys' thiol transferase against beta-hydroxyethyl disulfide (HED), as dehydroascorbate reductase and as dimethylarsinic acid reductase, while not active against the standard GST substrate 1-chloro-2,4-dinitrobenzene (CDNB). May be involved in cell wall organization and biogenesis. The chain is Glutathione S-transferase omega-like 2 from Saccharomyces cerevisiae (strain ATCC 204508 / S288c) (Baker's yeast).